The following is an 89-amino-acid chain: Small ribosomal subunit protein uS15 (89 aa).

Belongs to the universal ribosomal protein uS15 family. As to quaternary structure, part of the 30S ribosomal subunit. Forms a bridge to the 50S subunit in the 70S ribosome, contacting the 23S rRNA.

Functionally, one of the primary rRNA binding proteins, it binds directly to 16S rRNA where it helps nucleate assembly of the platform of the 30S subunit by binding and bridging several RNA helices of the 16S rRNA. Forms an intersubunit bridge (bridge B4) with the 23S rRNA of the 50S subunit in the ribosome. This chain is Small ribosomal subunit protein uS15, found in Beutenbergia cavernae (strain ATCC BAA-8 / DSM 12333 / CCUG 43141 / JCM 11478 / NBRC 16432 / NCIMB 13614 / HKI 0122).